We begin with the raw amino-acid sequence, 1044 residues long: MVSDLRSWKKGLQAVPLKPGVLKELGKNGQREALHKYRESTLNSGLNFKDVLKEKAELGEDADDKKVLVLSYPQYCRYRSIIARLRERPSSLLTDHVVLALGGIASLTNSTQILYCRDTFEHPTLVENESVCDEFAPNLKGRPRKKKLSISQRRDSQSGGARESNGVEGKTLVKMRADSKSGVSKPRNPSTGSCKRVQSENKPKGDGGDECRTDEQAFLVALYKYMKERKTPIERIPYLGFKQINLWTMFQAAQKLGGYEVITARRQWKNVYDELGGNPGSTSAATCTRRHYERLILPYERFTKGEEDKPLPPAKPRKQEGSVQESIIKAKMMPIKRPKDEQKTPRGDKDASAKVLELGMEDMEELQEKQNSQQLQAPTQTDRDPNSPLTEDDEGVLVIKDEDQPVLHNAYEHANGGLLPSLPQDGAQLKSEDCDAFPVAAVPLHHGHPLPNSHTSDQWKHGILEYKVPPSALANVEQSRPKEGQNQVVMVLPTLQQKPVTSPEIPPERVEPLKKEESCFNFNPLLYPRGNPGIMSPLAKKKMLSQVSGTGLLNNYPYGPPPPLVSRRLSSSGTEVSSAGQSSSQVSSSVETSIVIKRPSVIQHAQSFKSRGSEDRRSSTEGSQKDGCSEGEPVHHSQTLIREPYLKRVDPHSSMEKSAEMPRPGQAPSFLSEFYSSPHLHNLCRQTEHHLSKEQISKYLSRDVYTRDSETAQGFPPSQHPDNVGLNFSARLSQKEKGPPPERVTEEQPTDLSLPKSSPLKLPLSTSTLGGIPHAAIQQDIKNSPHFQAGNSQSSSVDYHPRACRVPPMTVSASKKVTESHSKVLEKTPNSRGEESMGFKIDEMSRPILSTKSSPQNICTARPLKRNIEDLENGPTEKKIRAVTPLHCSTQRDLPGKPRTPEADSESVKPAEPAVHINSYTSEGHKIPLHSHLFQGLYPGTFVSQVQDMCESLGSHVTPSYSHPLQYLKNQAVLSPLMPPFAIHSLMMQRQFLAANPAHMYRHQVGTSYGDILHPGLYPMSALHPQPAFSPPQLSSVHPSTKLS.

Disordered regions lie at residues 143–211 (PRKK…GDEC), 301–350 (RFTK…GDKD), 363–392 (MEEL…LTED), 554–591 (NNYP…SSVE), 603–672 (QHAQ…SFLS), 733–767 (SQKE…LSTS), 811–835 (VSAS…RGEE), and 884–912 (TPLH…KPAE). Composition is skewed to basic and acidic residues over residues 197-211 (VQSE…GDEC), 301-310 (RFTKGEEDKP), and 337-350 (RPKD…GDKD). Residues 212–304 (RTDEQAFLVA…LILPYERFTK (93 aa)) enclose the ARID domain. Positions 369-380 (KQNSQQLQAPTQ) are enriched in polar residues. Residues 565–591 (VSRRLSSSGTEVSSAGQSSSQVSSSVE) show a composition bias toward low complexity. 3 stretches are compositionally biased toward basic and acidic residues: residues 611 to 635 (RGSE…EPVH), 644 to 660 (PYLK…KSAE), and 733 to 746 (SQKE…RVTE). The span at 752-767 (LSLPKSSPLKLPLSTS) shows a compositional bias: low complexity. Basic and acidic residues-rich tracts occupy residues 816 to 826 (KVTESHSKVLE) and 894 to 909 (LPGK…ESVK).

This sequence belongs to the ARID5B family.

The protein localises to the nucleus. Functionally, transcription coactivator that binds to the 5'-AATA[CT]-3' core sequence and plays a key role in adipogenesis and liver development. Required for adipogenesis: regulates triglyceride metabolism in adipocytes by regulating expression of adipogenic genes. The sequence is that of AT-rich interactive domain-containing protein 5B (arid5b) from Danio rerio (Zebrafish).